Reading from the N-terminus, the 387-residue chain is 3-ketoacyl-CoA thiolase (387 aa).

The active-site Acyl-thioester intermediate is Cys91. Catalysis depends on proton acceptor residues His343 and Cys373.

The protein belongs to the thiolase-like superfamily. Thiolase family. As to quaternary structure, heterotetramer of two alpha chains (FadB) and two beta chains (FadA).

The protein localises to the cytoplasm. The enzyme catalyses an acyl-CoA + acetyl-CoA = a 3-oxoacyl-CoA + CoA. Its pathway is lipid metabolism; fatty acid beta-oxidation. Catalyzes the final step of fatty acid oxidation in which acetyl-CoA is released and the CoA ester of a fatty acid two carbons shorter is formed. The protein is 3-ketoacyl-CoA thiolase of Escherichia coli O6:K15:H31 (strain 536 / UPEC).